A 434-amino-acid chain; its full sequence is Ribosomal protein uS12 methylthiotransferase RimO (434 aa).

One can recognise an MTTase N-terminal domain in the interval 9 to 125 (PAIFLLSLGC…VLAAIGAKYR (117 aa)). Positions 18, 54, 88, 149, 153, and 156 each coordinate [4Fe-4S] cluster. In terms of domain architecture, Radical SAM core spans 135–364 (LTPPHYAFLK…MELQEGISAS (230 aa)). One can recognise a TRAM domain in the interval 367-434 (RKLEGQTLKV…AYELFGRISG (68 aa)).

Belongs to the methylthiotransferase family. RimO subfamily. Requires [4Fe-4S] cluster as cofactor.

The protein localises to the cytoplasm. It carries out the reaction L-aspartate(89)-[ribosomal protein uS12]-hydrogen + (sulfur carrier)-SH + AH2 + 2 S-adenosyl-L-methionine = 3-methylsulfanyl-L-aspartate(89)-[ribosomal protein uS12]-hydrogen + (sulfur carrier)-H + 5'-deoxyadenosine + L-methionine + A + S-adenosyl-L-homocysteine + 2 H(+). Its function is as follows. Catalyzes the methylthiolation of an aspartic acid residue of ribosomal protein uS12. The chain is Ribosomal protein uS12 methylthiotransferase RimO from Chlorobaculum tepidum (strain ATCC 49652 / DSM 12025 / NBRC 103806 / TLS) (Chlorobium tepidum).